Reading from the N-terminus, the 72-residue chain is Crustacean hyperglycemic hormone B (72 aa).

Gln1 is modified (pyrrolidone carboxylic acid). Phe3 bears the D-phenylalanine; in form CHHB-II mark. Disulfide bonds link Cys7–Cys43, Cys23–Cys39, and Cys26–Cys52. Val72 bears the Valine amide mark.

In terms of processing, stereoinversion of L-Phe (in CHHB-I) to D-Phe (in CHHB-II).

It localises to the secreted. In terms of biological role, hormone found in the sinus gland of isopods and decapods which controls the blood sugar level. Has a secretagogue action over the amylase released from the midgut gland. May act as a stress hormone and may be involved in the control of molting and reproduction. This Cherax destructor (Common yabby crayfish) protein is Crustacean hyperglycemic hormone B.